The primary structure comprises 525 residues: Matrix extracellular phosphoglycoprotein (525 aa).

The first 17 residues, 1–17 (MRVFCVGLLLFSVTWAA), serve as a signal peptide directing secretion. 3 disordered regions span residues 24–95 (TEKT…NRQR), 187–216 (AKAHSKDKKKPQRDSQAQKSPVKSKSTHRI), and 237–525 (EGSG…SDGD). Basic and acidic residues-rich tracts occupy residues 25–46 (EKTKQSCVEEQRQEEKNKDNIG) and 64–73 (IVQERKKDLS). Composition is skewed to polar residues over residues 75–95 (SEASENKGSSKSQNYFTNRQR) and 200–210 (DSQAQKSPVKS). The dentonin stretch occupies residues 242–264 (TDLQERGDNDISPFSGDGQPFKD). Positions 247–249 (RGD) match the Cell attachment site motif. The O-linked (Xyl...) (chondroitin sulfate) serine glycan is linked to serine 256. 2 stretches are compositionally biased toward basic and acidic residues: residues 292–312 (ESTHLDTKKPGYNEIPEREEN) and 319–328 (TRDETAKEAD). 2 N-linked (GlcNAc...) asparagine glycosylation sites follow: asparagine 477 and asparagine 478. The ASARM motif; interaction with PHEX stretch occupies residues 507-525 (RDDSSESSDSGSSSESDGD). Residues 513-525 (SSDSGSSSESDGD) are compositionally biased toward low complexity.

This sequence belongs to the PF07175/osteoregulin family. Interacts (via the ASARM motif) with PHEX; the interaction is zinc-dependent. Post-translationally, phosphorylated on serine residues in the ASARM motif (in vitro) by FAM20C; the phosphorylation is important for the inhibition of bone mineralization. In terms of processing, cleaved by CTSB/cathepsin B; the cleavage is blocked by metalloprotease PHEX. Detected in urine (at protein level). Expressed by osteoblasts. Expressed by stem cells in dental pulp. Expressed by mesenchymal cells in dental papilla and dental pulp. Expressed in teeth, specifically in decidious dentin. Expressed in ondotoblasts. Expressed in salivary glands. Secreted from oncogenic hypophosphatemic tumors.

It is found in the secreted. Its subcellular location is the extracellular space. The protein resides in the extracellular matrix. Promotes renal phosphate excretion and inhibits intestinal phosphate absorption. Promotes bone mineralization by osteoblasts and cartilage mineralization by chondrocytes. Regulates the mineralization of the extracellular matrix of the craniofacial complex, such as teeth, bone and cartilage. Promotes dental pulp stem cell proliferation and differentiation. This is Matrix extracellular phosphoglycoprotein (MEPE) from Homo sapiens (Human).